The sequence spans 427 residues: Adenylosuccinate synthetase (427 aa).

GTP is bound by residues 12–18 (GDEGKGK) and 40–42 (GHT). Residue aspartate 13 is the Proton acceptor of the active site. Aspartate 13 and glycine 40 together coordinate Mg(2+). Residues 13–16 (DEGK), 38–41 (NAGH), threonine 128, arginine 142, glutamine 223, threonine 238, and arginine 302 each bind IMP. The Proton donor role is filled by histidine 41. 298-304 (TTTGRNR) serves as a coordination point for substrate. Residues arginine 304, 330-332 (KLD), and 412-414 (GVG) each bind GTP.

It belongs to the adenylosuccinate synthetase family. As to quaternary structure, homodimer. Mg(2+) serves as cofactor.

The protein resides in the cytoplasm. The catalysed reaction is IMP + L-aspartate + GTP = N(6)-(1,2-dicarboxyethyl)-AMP + GDP + phosphate + 2 H(+). The protein operates within purine metabolism; AMP biosynthesis via de novo pathway; AMP from IMP: step 1/2. In terms of biological role, plays an important role in the de novo pathway of purine nucleotide biosynthesis. Catalyzes the first committed step in the biosynthesis of AMP from IMP. The chain is Adenylosuccinate synthetase from Thermobifida fusca (strain YX).